A 129-amino-acid polypeptide reads, in one-letter code: Bacteriohemerythrin (129 aa).

His-19, His-59, Glu-63, His-78, His-82, His-119, and Asp-124 together coordinate Fe cation.

Belongs to the hemerythrin family. Monomer.

Oxygen-binding protein. May be involved in a storage mechanism or for delivery to oxygen-requiring enzymes. The oxygen-binding site contains two iron atoms. This is Bacteriohemerythrin from Clostridium acetobutylicum (strain ATCC 824 / DSM 792 / JCM 1419 / IAM 19013 / LMG 5710 / NBRC 13948 / NRRL B-527 / VKM B-1787 / 2291 / W).